Reading from the N-terminus, the 159-residue chain is Large ribosomal subunit protein uL23m (159 aa).

This sequence belongs to the universal ribosomal protein uL23 family. Component of the mitochondrial ribosome large subunit (39S) which comprises a 16S rRNA and about 50 distinct proteins.

It is found in the mitochondrion. The polypeptide is Large ribosomal subunit protein uL23m (mrpl-23) (Caenorhabditis elegans).